Reading from the N-terminus, the 343-residue chain is N-acetyl-gamma-glutamyl-phosphate reductase (343 aa).

Cysteine 147 is a catalytic residue.

The protein belongs to the NAGSA dehydrogenase family. Type 1 subfamily.

Its subcellular location is the cytoplasm. The catalysed reaction is N-acetyl-L-glutamate 5-semialdehyde + phosphate + NADP(+) = N-acetyl-L-glutamyl 5-phosphate + NADPH + H(+). Its pathway is amino-acid biosynthesis; L-arginine biosynthesis; N(2)-acetyl-L-ornithine from L-glutamate: step 3/4. Its function is as follows. Catalyzes the NADPH-dependent reduction of N-acetyl-5-glutamyl phosphate to yield N-acetyl-L-glutamate 5-semialdehyde. The polypeptide is N-acetyl-gamma-glutamyl-phosphate reductase (Staphylococcus aureus (strain MRSA252)).